Reading from the N-terminus, the 460-residue chain is Lipase member I (460 aa).

Residues 1–15 (MRVYIFLCLMCWVRS) form the signal peptide. Residue asparagine 63 is glycosylated (N-linked (GlcNAc...) asparagine). Serine 159 (nucleophile) is an active-site residue. The active-site Charge relay system is the aspartate 183. A disulfide bond links cysteine 238 and cysteine 251. The Charge relay system role is filled by histidine 253. 2 disulfide bridges follow: cysteine 275/cysteine 286 and cysteine 289/cysteine 297. Asparagine 396 is a glycosylation site (N-linked (GlcNAc...) asparagine). A disulfide bridge links cysteine 436 with cysteine 455.

It belongs to the AB hydrolase superfamily. Lipase family. As to quaternary structure, interacts with heparin with a high affinity. Expressed in testis. Expressed exclusively at the connecting piece of the sperm.

The protein resides in the cell membrane. Its subcellular location is the secreted. The enzyme catalyses 1-hexadecanoyl-2-(9Z-octadecenoyl)-sn-glycero-3-phosphate + H2O = 2-(9Z-octadecenoyl)-sn-glycero-3-phosphate + hexadecanoate + H(+). With respect to regulation, inhibited by sodium vanadate. Hydrolyzes specifically phosphatidic acid (PA) to produce 2-acyl lysophosphatidic acid (LPA; a potent bioactive lipid mediator) and fatty acid. Does not hydrolyze other phospholipids, like phosphatidylserine (PS), phosphatidylcholine (PC) and phosphatidylethanolamine (PE) or triacylglycerol (TG). The chain is Lipase member I (LIPI) from Homo sapiens (Human).